A 367-amino-acid chain; its full sequence is MTTYAPGVPPQNRNPQSIGFLLLDNFTLISLASAVEPLRMANQLSGRELYRWHTLSLDGRQVWASDGLQITPDAGTDNAPAVDCVIVCGGVGIQRSVTREHVTFLQAQARQGRRLGAVCTGSWALARAGLLDGYDCSVHWECLAAMQEAFPRVAMSTRLFSIDRNRFTSSGGTAPMDMMLHLIGREHGRELSAAISEMFIYERIRNEQDHQRVPLKHMLGTNQPKLQEIVALMEANLEEPIDLDELAVYVNVSRRQLERLFQKYLHCSPSRYYLKLRLIRARQLLKQTSMSIIEVASVCGFVSTPHFSKCYREYFGIPPRDERQGQPLGQPVVLMPIPQDLALMPNSSALSALSQAQGESTFASVRI.

Positions 227 to 325 constitute an HTH araC/xylS-type domain; that stretch reads QEIVALMEAN…GIPPRDERQG (99 aa). 2 DNA-binding regions (H-T-H motif) span residues 244-265 and 292-315; these read DELAVYVNVSRRQLERLFQKYL and IIEVASVCGFVSTPHFSKCYREYF.

Functionally, specific regulator of choline metabolism, which activates transcription of at least 25 genes from 11 promoters in response to choline metabolites. Required for the induction of plcH, encoding the phospholipase C, and pchP, encoding the phosphorylcholine phosphatase, in response to glycine betaine (GB) and dimethylglycine (DMG). Also controls the expression of gbcAB and dgcAB, which are required for GB and DMG degradation, respectively, in response to both GB and DMG. The GbdR regulon also includes genes encoding sarcosine, glycine and serine catabolic enzymes, the BetX and CbcXWV quaternary amine transport proteins and the acetylcholine esterase gene, choE. Acts by binding directly to the promoter region of the genes. May play an important role during P.aeruginosa interactions with eukaryotes. In Pseudomonas aeruginosa (strain UCBPP-PA14), this protein is HTH-type transcriptional regulator GbdR.